We begin with the raw amino-acid sequence, 217 residues long: Translation initiation factor 6 (217 aa).

Belongs to the eIF-6 family.

Functionally, binds to the 50S ribosomal subunit and prevents its association with the 30S ribosomal subunit to form the 70S initiation complex. This chain is Translation initiation factor 6, found in Picrophilus torridus (strain ATCC 700027 / DSM 9790 / JCM 10055 / NBRC 100828 / KAW 2/3).